We begin with the raw amino-acid sequence, 354 residues long: N-acetyl-gamma-glutamyl-phosphate reductase (354 aa).

Cys156 is an active-site residue.

This sequence belongs to the NAGSA dehydrogenase family. Type 1 subfamily.

The protein resides in the cytoplasm. It carries out the reaction N-acetyl-L-glutamate 5-semialdehyde + phosphate + NADP(+) = N-acetyl-L-glutamyl 5-phosphate + NADPH + H(+). The protein operates within amino-acid biosynthesis; L-arginine biosynthesis; N(2)-acetyl-L-ornithine from L-glutamate: step 3/4. Functionally, catalyzes the NADPH-dependent reduction of N-acetyl-5-glutamyl phosphate to yield N-acetyl-L-glutamate 5-semialdehyde. This Bordetella bronchiseptica (strain ATCC BAA-588 / NCTC 13252 / RB50) (Alcaligenes bronchisepticus) protein is N-acetyl-gamma-glutamyl-phosphate reductase.